A 1972-amino-acid polypeptide reads, in one-letter code: Myosin-11 (1972 aa).

3 positions are modified to phosphoserine: Ser8, Ser23, and Ser40. In terms of domain architecture, Myosin N-terminal SH3-like spans 31–81; it reads VAKKLVWVPSEKQGFEAASIKEEKGDEVVVELVENGKKVTVGKDDIQKMNP. Positions 85–783 constitute a Myosin motor domain; that stretch reads SKVEDMAELT…VLAHLEEERD (699 aa). The residue at position 129 (Lys129) is an N6,N6,N6-trimethyllysine. 178–185 contributes to the ATP binding site; sequence GESGAGKT. Actin-binding stretches follow at residues 661 to 683 and 762 to 776; these read LGKLMATLRNTTANFVRCIIPNH and RIGQSKIFFRTGVLA. An IQ domain is found at 786-815; it reads ITDVIMAFQAMCRGYLARKAFTKRQQQLTA. Residues 844-1934 adopt a coiled-coil conformation; the sequence is LLQVTRQEEE…KSKLRRGNEA (1091 aa). Phosphothreonine is present on Thr1177. 2 positions are modified to phosphoserine: Ser1684 and Ser1722. A compositionally biased stretch (polar residues) spans 1771–1788; the sequence is NELATERSTAQKNESARQ. 2 disordered regions span residues 1771-1797 and 1867-1972; these read NELATERSTAQKNESARQQLERQNKEL and QYKE…KASE. The segment covering 1867–1876 has biased composition (basic and acidic residues); sequence QYKEQAEKGN. Residues 1935–1972 form a C-terminal region; the sequence is SFVPSRRAGGRRVIENTDGSEEEMDARDSDFNGTKASE. A Phosphothreonine modification is found at Thr1951. A phosphoserine mark is found at Ser1954 and Ser1971.

Belongs to the TRAFAC class myosin-kinesin ATPase superfamily. Myosin family. As to quaternary structure, muscle myosin is a hexameric protein that consists of 2 heavy chain subunits (MHC), 2 alkali light chain subunits (MLC) and 2 regulatory light chain subunits (MLC-2).

It is found in the melanosome. Its subcellular location is the cytoplasm. It localises to the myofibril. In terms of biological role, muscle contraction. In Mus musculus (Mouse), this protein is Myosin-11 (Myh11).